The chain runs to 276 residues: Pyridinium-3,5-bisthiocarboxylic acid mononucleotide synthase (276 aa).

C176 serves as the catalytic Nucleophile and sulfur donor. At C176 the chain carries 2,3-didehydroalanine (Cys).

This sequence belongs to the LarE family.

The catalysed reaction is pyridinium-3,5-dicarboxylate mononucleotide + [LarE protein]-L-cysteine + ATP = [LarE protein]-dehydroalanine + pyridinium-3-carboxylate-5-thiocarboxylate mononucleotide + AMP + diphosphate + H(+). The enzyme catalyses [LarE protein]-L-cysteine + pyridinium-3-carboxylate-5-thiocarboxylate mononucleotide + ATP = pyridinium-3,5-bisthiocarboxylate mononucleotide + [LarE protein]-dehydroalanine + AMP + diphosphate + H(+). Its function is as follows. Involved in the biosynthesis of a nickel-pincer cofactor ((SCS)Ni(II) pincer complex). Catalyzes the ATP-dependent incorporation of two sulfur atoms in pyridinium-3,5-biscarboxylic acid mononucleotide (P2CMN) to yield pyridinium-3,5-bisthiocarboxylic acid mononucleotide (P2TMN). The source of sulfur is the enzyme itself: Cys-176 of LarE is the sulfur donor, thereby being converted into dehydroalanine, and is not regenerated in vivo. Thus, two molecules of LarE undergo sacrificial sulfur transfer to create one P2TMN. Binds nickel. Is required for the activation of the lactate racemase LarA. May also be involved in the activation of other nickel-pincer cofactor-dependent enzymes. The chain is Pyridinium-3,5-bisthiocarboxylic acid mononucleotide synthase from Lactiplantibacillus plantarum (strain ATCC BAA-793 / NCIMB 8826 / WCFS1) (Lactobacillus plantarum).